We begin with the raw amino-acid sequence, 108 residues long: Translation initiation factor 1A (108 aa).

The S1-like domain maps to 11 to 85; it reads SVKEVPKPAE…NKCDIIYKYS (75 aa).

It belongs to the eIF-1A family.

Seems to be required for maximal rate of protein biosynthesis. Enhances ribosome dissociation into subunits and stabilizes the binding of the initiator Met-tRNA(I) to 40 S ribosomal subunits. This chain is Translation initiation factor 1A (eIF1A), found in Sulfurisphaera tokodaii (strain DSM 16993 / JCM 10545 / NBRC 100140 / 7) (Sulfolobus tokodaii).